Reading from the N-terminus, the 407-residue chain is Phosphopentomutase (407 aa).

Residues Asp10, Asp306, His311, Asp347, His348, and His359 each contribute to the Mn(2+) site.

The protein belongs to the phosphopentomutase family. Mn(2+) is required as a cofactor.

The protein localises to the cytoplasm. The catalysed reaction is 2-deoxy-alpha-D-ribose 1-phosphate = 2-deoxy-D-ribose 5-phosphate. It catalyses the reaction alpha-D-ribose 1-phosphate = D-ribose 5-phosphate. The protein operates within carbohydrate degradation; 2-deoxy-D-ribose 1-phosphate degradation; D-glyceraldehyde 3-phosphate and acetaldehyde from 2-deoxy-alpha-D-ribose 1-phosphate: step 1/2. Functionally, isomerase that catalyzes the conversion of deoxy-ribose 1-phosphate (dRib-1-P) and ribose 1-phosphate (Rib-1-P) to deoxy-ribose 5-phosphate (dRib-5-P) and ribose 5-phosphate (Rib-5-P), respectively. The polypeptide is Phosphopentomutase (Salmonella gallinarum (strain 287/91 / NCTC 13346)).